The following is a 68-amino-acid chain: Conotoxin Cal14.13c (68 aa).

Residues 1 to 20 (MKLCVVXVLLMLAMPFNGGE) form the signal peptide. Positions 21 to 68 (ASRFFNQHARSQRSGMKTRGIWCDPPCPEGETCRGGECSDEFNGDLGG) are excised as a propeptide. Leucine 66 carries the leucine amide modification.

Contains 2 disulfide bonds. As to expression, expressed by the venom duct.

The protein localises to the secreted. Functionally, probable neurotoxin with unknown target. Possibly targets ion channels. In Californiconus californicus (California cone), this protein is Conotoxin Cal14.13c.